The sequence spans 242 residues: Large ribosomal subunit protein uL1 (242 aa).

This sequence belongs to the universal ribosomal protein uL1 family. Part of the 50S ribosomal subunit.

Its function is as follows. Binds directly to 23S rRNA. The L1 stalk is quite mobile in the ribosome, and is involved in E site tRNA release. Protein L1 is also a translational repressor protein, it controls the translation of the L11 operon by binding to its mRNA. In Streptomyces virginiae (Streptomyces cinnamonensis), this protein is Large ribosomal subunit protein uL1.